The chain runs to 148 residues: Large ribosomal subunit protein bL9 (148 aa).

This sequence belongs to the bacterial ribosomal protein bL9 family.

Functionally, binds to the 23S rRNA. The sequence is that of Large ribosomal subunit protein bL9 from Listeria innocua serovar 6a (strain ATCC BAA-680 / CLIP 11262).